We begin with the raw amino-acid sequence, 418 residues long: Maltoporin (418 aa).

A signal peptide spans 1 to 26; sequence MLPMNRNTLGLAVTIATVFVSSTVTA.

This sequence belongs to the porin LamB (TC 1.B.3) family. In terms of assembly, homotrimer formed of three 18-stranded antiparallel beta-barrels, containing three independent channels.

It is found in the cell outer membrane. The catalysed reaction is beta-maltose(in) = beta-maltose(out). In terms of biological role, involved in the transport of maltose and maltodextrins. This chain is Maltoporin, found in Photobacterium profundum (strain SS9).